Consider the following 486-residue polypeptide: MSKDIRVRYAPSPTGLLHIGNARTALFNYLYARHHGGTFLIRIEDTDRKRHVEDGERSQLENLRWLGMDWDESPESHENYRQSERLDLYQKYIDQLLAEGKAYKSYVTEEELAAERERQEVAGETPRYINEYLGMSEEEKAAYIAEREAAGIIPTVRLAVNESGIYKWHDMVKGDIEFEGGNIGGDWIIQKKDGYPTYNFAVAIDDHDMQISHVIRGDDHIANTPKQLMVYEALGWEAPEFGHMTLIINSETGKKLSKRDTNTLQFIEDYRKKGYLPEAVFNFIALLGWNPGGEDEIFSREELIKLFDENRLSKSPAAFDQKKLDWMSNDYIKNADLETIFEMAKPFLEEAGRLTDKAEKLVELYKPQMKSVDEIIPLTDLFFSDFPELTEAEREVMTGETVPTVLEAFKAKLEAMTDDKFVTENIFPQIKAVQKETGIKGKNLFMPIRIAVSGEMHGPELPDTIFLLGREKSIQHIENMLKEISK.

The 'HIGH' region signature appears at 11 to 21; the sequence is PSPTGLLHIGN. Residues 255 to 259 carry the 'KMSKS' region motif; the sequence is KLSKR. Lys258 provides a ligand contact to ATP.

This sequence belongs to the class-I aminoacyl-tRNA synthetase family. Glutamate--tRNA ligase type 1 subfamily. As to quaternary structure, monomer.

It localises to the cytoplasm. The enzyme catalyses tRNA(Glu) + L-glutamate + ATP = L-glutamyl-tRNA(Glu) + AMP + diphosphate. In terms of biological role, catalyzes the attachment of glutamate to tRNA(Glu) in a two-step reaction: glutamate is first activated by ATP to form Glu-AMP and then transferred to the acceptor end of tRNA(Glu). In Streptococcus pneumoniae (strain ATCC BAA-255 / R6), this protein is Glutamate--tRNA ligase.